We begin with the raw amino-acid sequence, 363 residues long: Glyceraldehyde-3-phosphate dehydrogenase, muscle (363 aa).

Residues 1-176 (MVKVGVNGFG…KYDKSLKIVS (176 aa)) form an interaction with WARS region. Position 3 is an N6,N6-dimethyllysine (lysine 3). Position 7 is a deamidated asparagine (asparagine 7). NAD(+) contacts are provided by residues 11–12 (RI) and aspartate 33. Tyrosine 70 bears the Phosphotyrosine mark. N6-acetyllysine is present on lysine 89. The residue at position 92 (asparagine 92) is a Deamidated asparagine. Lysine 94 carries the post-translational modification N6,N6-dimethyllysine. At asparagine 98 the chain carries Deamidated asparagine. Threonine 103 carries the post-translational modification Phosphothreonine. NAD(+)-binding residues include arginine 108 and serine 150. Serine 150 and serine 176 each carry phosphoserine. A Deamidated asparagine modification is found at asparagine 177. Residue serine 179 is modified to Phosphoserine. 179–181 (SCT) is a binding site for D-glyceraldehyde 3-phosphate. Cysteine 180 acts as the Nucleophile in catalysis. At cysteine 180 the chain carries ADP-ribosylcysteine; by autocatalysis; in irreversibly inhibited form. The residue at position 180 (cysteine 180) is a Cysteine persulfide. Cysteine 180 is subject to S-(2-succinyl)cysteine. At cysteine 180 the chain carries S-nitrosocysteine; in reversibly inhibited form. Threonine 181 bears the Phosphothreonine mark. The residue at position 183 (asparagine 183) is a Deamidated asparagine. Residues threonine 205, threonine 210, and threonine 212 each carry the phosphothreonine modification. Residue threonine 210 participates in D-glyceraldehyde 3-phosphate binding. Residue lysine 214 forms a Glycyl lysine isopeptide (Lys-Gly) (interchain with G-Cter in SUMO2) linkage. Position 222 is an N6,N6-dimethyllysine; alternate (lysine 222). The residue at position 222 (lysine 222) is an N6-acetyllysine; alternate. Lysine 222 carries the post-translational modification N6-malonyllysine; alternate. Threonine 239 carries the post-translational modification Phosphothreonine. 239–240 (TG) serves as a coordination point for D-glyceraldehyde 3-phosphate. Lysine 243 is subject to N6,N6-dimethyllysine; alternate. At lysine 243 the chain carries N6-malonyllysine; alternate. N6-acetyllysine is present on lysine 247. Deamidated asparagine is present on asparagine 253. The residue at position 255 (lysine 255) is an N6,N6-dimethyllysine; alternate. At lysine 255 the chain carries N6-acetyllysine; alternate. Threonine 257 is subject to Phosphothreonine. Arginine 262 lines the D-glyceraldehyde 3-phosphate pocket. A Phosphothreonine modification is found at threonine 265. At serine 269 the chain carries Phosphoserine. Cysteine 275 is subject to S-(2-succinyl)cysteine. Residue cysteine 275 is modified to S-nitrosocysteine. Lysine 282 bears the N6-acetyllysine mark. Residue lysine 291 is modified to N6,N6-dimethyllysine. Serine 340 bears the Phosphoserine mark. Asparagine 344 is modified (deamidated asparagine). Asparagine 344 is an NAD(+) binding site. At serine 361 the chain carries Phosphoserine. Lysine 362 is subject to N6,N6-dimethyllysine.

Belongs to the glyceraldehyde-3-phosphate dehydrogenase family. In terms of assembly, homotetramer. Interacts with TPPP; the interaction is direct. Interacts (when S-nitrosylated) with SIAH1; leading to nuclear translocation. Interacts with RILPL1/GOSPEL, leading to prevent the interaction between GAPDH and SIAH1 and prevent nuclear translocation. Interacts with CHP1; the interaction increases the binding of CHP1 with microtubules. Associates with microtubules. Interacts with EIF1AD, USP25, PRKCI and WARS1. Interacts with phosphorylated RPL13A; inhibited by oxidatively-modified low-densitity lipoprotein (LDL(ox)). Component of the GAIT complex. Interacts with FKBP6; leading to inhibit GAPDH catalytic activity. Interacts with TRAF2, promoting TRAF2 ubiquitination. Interacts with TRAF3, promoting TRAF3 ubiquitination. In terms of processing, ISGylated. Post-translationally, S-nitrosylation of Cys-180 leads to interaction with SIAH1, followed by translocation to the nucleus S-nitrosylation of Cys-275 is induced by interferon-gamma and LDL(ox) implicating the iNOS-S100A8/9 transnitrosylase complex and seems to prevent interaction with phosphorylated RPL13A and to interfere with GAIT complex activity. Sulfhydration at Cys-180 increases catalytic activity.

Its subcellular location is the cytoplasm. The protein localises to the cytosol. It localises to the cytoskeleton. It is found in the nucleus. The enzyme catalyses D-glyceraldehyde 3-phosphate + phosphate + NAD(+) = (2R)-3-phospho-glyceroyl phosphate + NADH + H(+). It catalyses the reaction S-nitroso-L-cysteinyl-[GAPDH] + L-cysteinyl-[protein] = L-cysteinyl-[GAPDH] + S-nitroso-L-cysteinyl-[protein]. The protein operates within carbohydrate degradation; glycolysis; pyruvate from D-glyceraldehyde 3-phosphate: step 1/5. With respect to regulation, glyceraldehyde-3-phosphate dehydrogenase activity is inhibited by fumarate, via the formation of S-(2-succinyl)cysteine residues. Functionally, has both glyceraldehyde-3-phosphate dehydrogenase and nitrosylase activities, thereby playing a role in glycolysis and nuclear functions, respectively. Glyceraldehyde-3-phosphate dehydrogenase is a key enzyme in glycolysis that catalyzes the first step of the pathway by converting D-glyceraldehyde 3-phosphate (G3P) into 3-phospho-D-glyceroyl phosphate. Modulates the organization and assembly of the cytoskeleton. Facilitates the CHP1-dependent microtubule and membrane associations through its ability to stimulate the binding of CHP1 to microtubules. Component of the GAIT (gamma interferon-activated inhibitor of translation) complex which mediates interferon-gamma-induced transcript-selective translation inhibition in inflammation processes. Upon interferon-gamma treatment assembles into the GAIT complex which binds to stem loop-containing GAIT elements in the 3'-UTR of diverse inflammatory mRNAs (such as ceruplasmin) and suppresses their translation. Also plays a role in innate immunity by promoting TNF-induced NF-kappa-B activation and type I interferon production, via interaction with TRAF2 and TRAF3, respectively. Participates in nuclear events including transcription, RNA transport, DNA replication and apoptosis. Nuclear functions are probably due to the nitrosylase activity that mediates cysteine S-nitrosylation of nuclear target proteins such as SIRT1, HDAC2 and PRKDC. The chain is Glyceraldehyde-3-phosphate dehydrogenase, muscle from Jaculus orientalis (Greater Egyptian jerboa).